We begin with the raw amino-acid sequence, 124 residues long: MNNVLFVALGGSIGAVLRYLISLLMLQVFGSGFPFGTLVVNILGSFLMGVIFALGQVSELSPEIKAFIGVGMLGALTTFSTFSNESLLLMQEGELVKAVLNVVVNVGVCIFVVYLGQQLVFSRF.

4 helical membrane passes run 4 to 24 (VLFVALGGSIGAVLRYLISLL), 35 to 55 (FGTLVVNILGSFLMGVIFALG), 62 to 82 (PEIKAFIGVGMLGALTTFSTF), and 95 to 115 (LVKAVLNVVVNVGVCIFVVYL). Residues G74 and T77 each contribute to the Na(+) site.

It belongs to the fluoride channel Fluc/FEX (TC 1.A.43) family.

It is found in the cell inner membrane. It carries out the reaction fluoride(in) = fluoride(out). With respect to regulation, na(+) is not transported, but it plays an essential structural role and its presence is essential for fluoride channel function. Functionally, fluoride-specific ion channel. Important for reducing fluoride concentration in the cell, thus reducing its toxicity. The sequence is that of Fluoride-specific ion channel FluC from Shewanella halifaxensis (strain HAW-EB4).